A 173-amino-acid chain; its full sequence is Ferric citrate uptake sigma factor FecI (173 aa).

The Polymerase core binding motif lies at Asp40–Ser52. The segment at residues Tyr139–Ala158 is a DNA-binding region (H-T-H motif).

It belongs to the sigma-70 factor family. ECF subfamily. Interacts with FecR (via cytoplasmic N-terminus).

Its function is as follows. Sigma factors are initiation factors that promote the attachment of RNA polymerase to specific initiation sites and are then released. This sigma factor regulates transcriptional activation of the fecABCDE operon which mediates ferric citrate transport. The sequence is that of Ferric citrate uptake sigma factor FecI (fecI) from Escherichia coli (strain K12).